The sequence spans 551 residues: Protein GZF3 (551 aa).

The disordered stretch occupies residues 17-43 (DNVFEPKSSENLNSLNQSEEEGHIGRW). The GATA-type zinc finger occupies 131-155 (CKNCLTSTTPLWRRDEHGAMLCNAC). Disordered stretches follow at residues 212 to 260 (GRKA…SATK), 379 to 400 (LAPTSSRTTDSNPSEVPNQIRS), and 467 to 490 (SISNSVSSSDVSGRKFENHPAKDL). Over residues 228–239 (SQLLMGTSSTAK) the composition is skewed to polar residues. The span at 244–254 (PKTESKERSDS) shows a compositional bias: basic and acidic residues. Positions 388-400 (DSNPSEVPNQIRS) are enriched in polar residues. Low complexity predominate over residues 467–477 (SISNSVSSSDV). Over residues 478–490 (SGRKFENHPAKDL) the composition is skewed to basic and acidic residues.

It localises to the nucleus. This chain is Protein GZF3 (GZF3), found in Saccharomyces cerevisiae (strain ATCC 204508 / S288c) (Baker's yeast).